Reading from the N-terminus, the 465-residue chain is E3 ubiquitin-protein ligase parkin (465 aa).

The 76-residue stretch at 1 to 76 (MIVFVRFNSS…VHIVQRPWRK (76 aa)) folds into the Ubiquitin-like domain. The residue at position 65 (Ser-65) is a Phosphoserine; by PINK1. The disordered stretch occupies residues 77-99 (GQEMNATGGDDPRNAAGGCEREP). Positions 77-237 (GQEMNATGGD…LIATNSRNIT (161 aa)) are necessary for PINK1-dependent localization to mitochondria. The segment at 141–225 (SIYNSFYVYC…PTSDKETSVA (85 aa)) adopts an RING-type 0; atypical zinc-finger fold. Thr-175 is subject to Phosphothreonine; by PINK1. The SYT11 binding 1 stretch occupies residues 204 to 238 (TSAEFFFKCGAHPTSDKETSVALHLIATNSRNITC). Thr-217 is modified (phosphothreonine). Residues 234–465 (RNITCITCTD…VCMGDHWFDV (232 aa)) form a TRIAD supradomain region. Residues Cys-238, Cys-241, Cys-253, His-257, Cys-260, Cys-263, Cys-289, Cys-293, Cys-332, and Cys-337 each contribute to the Zn(2+) site. The RING-type 1 zinc finger occupies 238 to 293 (CITCTDVRSPVLVFQCNSRHVICLDCFHLYCVTRLNDRQFVHDPQLGYSLPCVAGC). The segment at 257–293 (HVICLDCFHLYCVTRLNDRQFVHDPQLGYSLPCVAGC) is SYT11 binding 2. The segment at 313 to 377 (NRYQQYGAEE…CKEAYHEGEC (65 aa)) adopts an IBR-type zinc-finger fold. A Glycyl lysine isopeptide (Lys-Gly) (interchain with G-Cter in ISG15) cross-link involves residue Lys-349. Zn(2+)-binding residues include Cys-352, Cys-360, Cys-365, and Cys-368. Residue Lys-369 forms a Glycyl lysine isopeptide (Lys-Gly) (interchain with G-Cter in ISG15) linkage. Zn(2+) is bound by residues His-373 and Cys-377. Residues 378–410 (SAVFEASGTTTQAYRVDERAAEQARWEAASKET) are REP. 2 residues coordinate Zn(2+): Cys-418 and Cys-421. An RING-type 2; atypical zinc finger spans residues 418–449 (CPRCHVPVEKNGGCMHMKCPQPQCRLEWCWNC). Cys-431 is an active-site residue. Zn(2+) contacts are provided by Cys-436, Cys-441, Cys-446, Cys-449, Cys-457, and His-461.

It belongs to the RBR family. Parkin subfamily. Forms an E3 ubiquitin ligase complex with UBE2L3 or UBE2L6. Mediates 'Lys-63'-linked polyubiquitination by associating with UBE2V1. Part of a SCF-like complex, consisting of PRKN, CUL1 and FBXW7. Interacts with SNCAIP. Binds to the C2A and C2B domains of SYT11. Interacts and regulates the turnover of SEPTIN5. Part of a complex, including STUB1, HSP70 and GPR37. The amount of STUB1 in the complex increases during ER stress. STUB1 promotes the dissociation of HSP70 from PRKN and GPR37, thus facilitating PRKN-mediated GPR37 ubiquitination. HSP70 transiently associates with unfolded GPR37 and inhibits the E3 activity of PRKN, whereas, STUB1 enhances the E3 activity of PRKN through promotion of dissociation of HSP70 from PRKN-GPR37 complexes. Interacts with PSMD4 and PACRG. Interacts with LRRK2. Interacts with RANBP2. Interacts with SUMO1 but not SUMO2, which promotes nuclear localization and autoubiquitination. Interacts (via first RING-type domain) with AIMP2 (via N-terminus). Interacts with PSMA7 and RNF41. Interacts with PINK1. Forms a complex with PINK1 and PARK7. Interacts with CHPF, the interaction with isoform 2 may facilitate PRKN transport into the mitochondria. Interacts with MFN2 (phosphorylated), promotes PRKN localization in dysfunctional depolarized mitochondria. Interacts with FBXO7; this promotes translocation to dysfunctional depolarized mitochondria. Interacts with ZNF746. Interacts with heat shock protein 70 family members, including HSPA1L, HSPA1A and HSPA8; interaction HSPA1L promotes translocation to damaged mitochondria. Interacts with BAG4 and, to a lesser extent, BAG5; interaction with BAG4 inhibits translocation to damaged mitochondria. Forms a complex with PRKN and PARK7. Interacts with AMBRA1. In terms of processing, ISGylated. Conjugated to ubiquitin-like protein ISG15 upon IFN-beta stimulation. ISGylation positively regulates its E3 ligase activity. Post-translationally, auto-ubiquitinates in an E2-dependent manner leading to its own degradation. Also polyubiquitinated by RNF41 for proteasomal degradation. S-nitrosylated. The inhibition of PRKN ubiquitin E3 ligase activity by S-nitrosylation could contribute to the degenerative process in PD by impairing the ubiquitination of PRKN substrates. In terms of processing, phosphorylated. Activation requires phosphorylation at Ser-65 by PINK1 and binding to PINK1 phosphorylated ubiquitin. Phosphorylation at Thr-175 by PINK1 and at Thr-217 is important for mitochondrial localization. As to expression, highly expressed in the brain including the substantia nigra. Expressed in heart, testis and skeletal muscle. Expression is down-regulated or absent in tumor biopsies, and absent in the brain of PARK2 patients. Overexpression protects dopamine neurons from kainate-mediated apoptosis. Found in serum (at protein level).

It localises to the cytoplasm. The protein localises to the cytosol. It is found in the nucleus. Its subcellular location is the endoplasmic reticulum. The protein resides in the mitochondrion. It localises to the mitochondrion outer membrane. The protein localises to the cell projection. It is found in the neuron projection. Its subcellular location is the postsynaptic density. The protein resides in the presynapse. It carries out the reaction [E2 ubiquitin-conjugating enzyme]-S-ubiquitinyl-L-cysteine + [acceptor protein]-L-lysine = [E2 ubiquitin-conjugating enzyme]-L-cysteine + [acceptor protein]-N(6)-ubiquitinyl-L-lysine.. It participates in protein modification; protein ubiquitination. In the autoinhibited state the side chain of Phe-463 inserts into a hydrophobic groove in RING-0, occluding the ubiquitin acceptor site Cys-431, whereas the REP repressor element binds RING-1 and blocks its E2-binding site. Activation of PRKN requires 2 steps: (1) phosphorylation at Ser-65 by PINK1 and (2) binding to phosphorylated ubiquitin, leading to unlock repression of the catalytic Cys-431 by the RING-0 region via an allosteric mechanism and converting PRKN to its fully-active form. According to another report, phosphorylation at Ser-65 by PINK1 is not essential for activation and only binding to phosphorylated ubiquitin is essential to unlock repression. In addition, ISG15 conjugation positively regulates its ubiquitin E3 ligase activity by suppressing the intramolecular interaction that maintains its autoinhibited conformation. Its function is as follows. Functions within a multiprotein E3 ubiquitin ligase complex, catalyzing the covalent attachment of ubiquitin moieties onto substrate proteins. Substrates include SYT11 and VDAC1. Other substrates are BCL2, CCNE1, GPR37, RHOT1/MIRO1, MFN1, MFN2, STUB1, SNCAIP, SEPTIN5, TOMM20, USP30, ZNF746, MIRO1 and AIMP2. Mediates monoubiquitination as well as 'Lys-6', 'Lys-11', 'Lys-48'-linked and 'Lys-63'-linked polyubiquitination of substrates depending on the context. Participates in the removal and/or detoxification of abnormally folded or damaged protein by mediating 'Lys-63'-linked polyubiquitination of misfolded proteins such as PARK7: 'Lys-63'-linked polyubiquitinated misfolded proteins are then recognized by HDAC6, leading to their recruitment to aggresomes, followed by degradation. Mediates 'Lys-63'-linked polyubiquitination of a 22 kDa O-linked glycosylated isoform of SNCAIP, possibly playing a role in Lewy-body formation. Mediates monoubiquitination of BCL2, thereby acting as a positive regulator of autophagy. Protects against mitochondrial dysfunction during cellular stress, by acting downstream of PINK1 to coordinate mitochondrial quality control mechanisms that remove and replace dysfunctional mitochondrial components. Depending on the severity of mitochondrial damage and/or dysfunction, activity ranges from preventing apoptosis and stimulating mitochondrial biogenesis to regulating mitochondrial dynamics and eliminating severely damaged mitochondria via mitophagy. Activation and recruitment onto the outer membrane of damaged/dysfunctional mitochondria (OMM) requires PINK1-mediated phosphorylation of both PRKN and ubiquitin. After mitochondrial damage, functions with PINK1 to mediate the decision between mitophagy or preventing apoptosis by inducing either the poly- or monoubiquitination of VDAC1, respectively; polyubiquitination of VDAC1 promotes mitophagy, while monoubiquitination of VDAC1 decreases mitochondrial calcium influx which ultimately inhibits apoptosis. When cellular stress results in irreversible mitochondrial damage, promotes the autophagic degradation of dysfunctional depolarized mitochondria (mitophagy) by promoting the ubiquitination of mitochondrial proteins such as TOMM20, RHOT1/MIRO1, MFN1 and USP30. Preferentially assembles 'Lys-6'-, 'Lys-11'- and 'Lys-63'-linked polyubiquitin chains, leading to mitophagy. The PINK1-PRKN pathway also promotes fission of damaged mitochondria by PINK1-mediated phosphorylation which promotes the PRKN-dependent degradation of mitochondrial proteins involved in fission such as MFN2. This prevents the refusion of unhealthy mitochondria with the mitochondrial network or initiates mitochondrial fragmentation facilitating their later engulfment by autophagosomes. Regulates motility of damaged mitochondria via the ubiquitination and subsequent degradation of MIRO1 and MIRO2; in motor neurons, this likely inhibits mitochondrial intracellular anterograde transport along the axons which probably increases the chance of the mitochondria undergoing mitophagy in the soma. Involved in mitochondrial biogenesis via the 'Lys-48'-linked polyubiquitination of transcriptional repressor ZNF746/PARIS which leads to its subsequent proteasomal degradation and allows activation of the transcription factor PPARGC1A. Limits the production of reactive oxygen species (ROS). Regulates cyclin-E during neuronal apoptosis. In collaboration with CHPF isoform 2, may enhance cell viability and protect cells from oxidative stress. Independently of its ubiquitin ligase activity, protects from apoptosis by the transcriptional repression of p53/TP53. May protect neurons against alpha synuclein toxicity, proteasomal dysfunction, GPR37 accumulation, and kainate-induced excitotoxicity. May play a role in controlling neurotransmitter trafficking at the presynaptic terminal and in calcium-dependent exocytosis. May represent a tumor suppressor gene. The polypeptide is E3 ubiquitin-protein ligase parkin (Homo sapiens (Human)).